The primary structure comprises 202 residues: ATP-dependent Clp protease proteolytic subunit (202 aa).

The Nucleophile role is filled by serine 101. Histidine 126 is a catalytic residue.

This sequence belongs to the peptidase S14 family. As to quaternary structure, component of the chloroplastic Clp protease core complex.

Its subcellular location is the plastid. It localises to the chloroplast stroma. It carries out the reaction Hydrolysis of proteins to small peptides in the presence of ATP and magnesium. alpha-casein is the usual test substrate. In the absence of ATP, only oligopeptides shorter than five residues are hydrolyzed (such as succinyl-Leu-Tyr-|-NHMec, and Leu-Tyr-Leu-|-Tyr-Trp, in which cleavage of the -Tyr-|-Leu- and -Tyr-|-Trp bonds also occurs).. Its function is as follows. Cleaves peptides in various proteins in a process that requires ATP hydrolysis. Has a chymotrypsin-like activity. Plays a major role in the degradation of misfolded proteins. The sequence is that of ATP-dependent Clp protease proteolytic subunit from Acorus gramineus (Dwarf sweet flag).